We begin with the raw amino-acid sequence, 176 residues long: Methylmalonyl-CoA epimerase, mitochondrial (176 aa).

Residues 1–36 (MARVLKAAAANAVGLFSRLQAPIPTVRASSTSQPLD) constitute a mitochondrion transit peptide. Residues 47-176 (RLNHVAIAVP…GGVLVELEQA (130 aa)) form the VOC domain. Position 50 (H50) interacts with Co(2+). N6-succinyllysine is present on K114. Position 122 (H122) interacts with Co(2+). An N6-acetyllysine; alternate modification is found at K150. Position 150 is an N6-succinyllysine; alternate (K150). E172 contacts Co(2+).

The protein belongs to the methylmalonyl-CoA epimerase family.

The protein localises to the mitochondrion. It catalyses the reaction (R)-methylmalonyl-CoA = (S)-methylmalonyl-CoA. In terms of biological role, methylmalonyl-CoA epimerase involved in propionyl-CoA metabolism. This Homo sapiens (Human) protein is Methylmalonyl-CoA epimerase, mitochondrial.